A 353-amino-acid chain; its full sequence is Tsukushi (353 aa).

The signal sequence occupies residues 1–16 (MPWPLLLLLAVSGAQT). Positions 17-58 (TRPCFPGCQCEVETFGLFDSFSLTRVDCSGLGPHIMPVPIPL) constitute an LRRNT domain. LRR repeat units lie at residues 59 to 80 (DTAHLDLSSNRLEMVNESVLAG), 85 to 106 (TLAGLDLSHNLLTSISPTAFSR), 109 to 130 (YLESLDLSHNGLTALPAESFTS), 132 to 153 (PLSDVNLSHNQLREVSVSAFTT), 159 to 179 (ALHVDLSHNLIHRLVPHPTRA), 185 to 206 (TIQSLNLAWNRLHAVPNLRDLP), 207 to 227 (LRYLSLDGNPLAVIGPGAFAG), 230 to 249 (GLTHLSLASLQRLPELAPSG), 255 to 276 (GLQVLDLSGNPKLNWAGAEVFS), and 280 to 301 (SLQELDLSGTNLVPLPEALLLH). Asn74 is a glycosylation site (N-linked (GlcNAc...) asparagine). A glycan (N-linked (GlcNAc...) asparagine) is linked at Asn137.

Interacts with FZD4 (via FZ domain); competes with WNT2B for binding to FZD4, inhibiting Wnt signaling and repressing peripheral eye development. Interacts with TGFB1; the interaction contributes to regulation of the hair cycle. Interacts with netrin. Interacts with CCN2.

Its subcellular location is the secreted. Contributes to various developmental events and other processes such as wound healing and cholesterol homeostasis through its interactions with multiple signaling pathways. Wnt signaling inhibitor which competes with WNT2B for binding to Wnt receptor FZD4 and represses WNT2B-dependent development of the peripheral eye. Plays a role in regulating the hair cycle by controlling TGFB1 signaling. Required for the development of the anterior commissure in the brain by inhibiting neurite outgrowth. Essential for terminal differentiation of hippocampal neural stem cells. Plays a role in regulating bone elongation and bone mass by modulating growth plate chondrocyte function and overall body size. Required for development of the inner ear through its involvement in stereocilia formation in inner hair cells. Facilitates wound healing by inhibiting secretion of TGFB1 from macrophages which prevents myofibroblast differentiation, maintaining inflammatory cell quiescence. Plays a role in cholesterol homeostasis by reducing circulating high-density lipoprotein cholesterol, lowering cholesterol efflux capacity and decreasing cholesterol-to-bile acid conversion in the liver. In one study, shown to negatively regulate sympathetic innervation in brown fat, leading to reduced energy expenditure. In another study, shown not to affect brown fat thermogenic capacity, body weight gain or glucose homeostasis. The chain is Tsukushi (TSKU) from Homo sapiens (Human).